Consider the following 316-residue polypeptide: MASHKHPGSPGWTGPICQDMAGTTPKASAPRPDLPRPGPEDHLEAQGSPSSNSSMTTRELQEYWRAQKCCWKHVKLLFEIASARIEERKVSKFVMYQIVVIQTGSFDSNKAVLERRYSDFETLQKKLLKTFREEIEDVVFPKKHLIGNFTEEMISERKLALKEYLSVLYAIRCVRRSREFIDFLTRPELKEAFGCLRAGQYTKALDILMRVVPLQEKLTAHCPVLLVPALCAMLVCHRDLDRPAEAFAVGERALQCLQAREGHRYYAPLLDAMARLAYLLGKDFVSLQKRLEESQLRKPALRGFTLKELTVQEYLS.

The interval Met-1–Thr-57 is disordered. Residue Ser-3 is modified to Phosphoserine. Over residues Gly-47–Thr-57 the composition is skewed to polar residues. Residues Val-74–Glu-191 enclose the PX domain. Positions 116, 118, 143, and 157 each coordinate a 1,2-diacyl-sn-glycero-3-phospho-(1D-myo-inositol-3-phosphate).

Belongs to the sorting nexin family. Interacts with SELPLG. Interaction with SELPLG is controversial.

Its subcellular location is the early endosome membrane. It is found in the cell membrane. The protein resides in the cytoplasm. The protein localises to the nucleus. Functionally, may play a role in cellular vesicle trafficking. Has been proposed to function as a sorting protein that targets SELPLG into endosomes, but has no effect on SELPLG internalization from the cell surface, or on SELPLG-mediated cell-cell adhesion. The polypeptide is Sorting nexin-20 (SNX20) (Bos taurus (Bovine)).